A 347-amino-acid chain; its full sequence is Protein RecA (347 aa).

ATP is bound at residue 66–73 (GPESSGKT). Residues 328 to 347 (MPKPNAPKATDEALDETGTD) form a disordered region.

Belongs to the RecA family.

The protein localises to the cytoplasm. Its function is as follows. Can catalyze the hydrolysis of ATP in the presence of single-stranded DNA, the ATP-dependent uptake of single-stranded DNA by duplex DNA, and the ATP-dependent hybridization of homologous single-stranded DNAs. It interacts with LexA causing its activation and leading to its autocatalytic cleavage. In Hydrogenovibrio crunogenus (strain DSM 25203 / XCL-2) (Thiomicrospira crunogena), this protein is Protein RecA.